A 244-amino-acid chain; its full sequence is Phosphoadenosine 5'-phosphosulfate reductase (244 aa).

The active-site Nucleophile; cysteine thiosulfonate intermediate is the Cys239.

Belongs to the PAPS reductase family. CysH subfamily.

Its subcellular location is the cytoplasm. The catalysed reaction is [thioredoxin]-disulfide + sulfite + adenosine 3',5'-bisphosphate + 2 H(+) = [thioredoxin]-dithiol + 3'-phosphoadenylyl sulfate. Its pathway is sulfur metabolism; hydrogen sulfide biosynthesis; sulfite from sulfate: step 3/3. Catalyzes the formation of sulfite from phosphoadenosine 5'-phosphosulfate (PAPS) using thioredoxin as an electron donor. The chain is Phosphoadenosine 5'-phosphosulfate reductase from Photorhabdus laumondii subsp. laumondii (strain DSM 15139 / CIP 105565 / TT01) (Photorhabdus luminescens subsp. laumondii).